The sequence spans 141 residues: Holo-[acyl-carrier-protein] synthase (141 aa).

Residues aspartate 7 and glutamate 57 each coordinate Mg(2+).

Belongs to the P-Pant transferase superfamily. AcpS family. The cofactor is Mg(2+).

It localises to the cytoplasm. The enzyme catalyses apo-[ACP] + CoA = holo-[ACP] + adenosine 3',5'-bisphosphate + H(+). In terms of biological role, transfers the 4'-phosphopantetheine moiety from coenzyme A to a Ser of acyl-carrier-protein. This chain is Holo-[acyl-carrier-protein] synthase, found in Corynebacterium efficiens (strain DSM 44549 / YS-314 / AJ 12310 / JCM 11189 / NBRC 100395).